A 369-amino-acid chain; its full sequence is Naringenin,2-oxoglutarate 3-dioxygenase (369 aa).

A Fe2OG dioxygenase domain is found at 193-297; the sequence is CVDMDQKVVV…RLSIATFQNP (105 aa). The Fe cation site is built by histidine 220, aspartate 222, and histidine 278. Arginine 288 provides a ligand contact to 2-oxoglutarate.

It belongs to the iron/ascorbate-dependent oxidoreductase family. Requires Fe(2+) as cofactor. It depends on L-ascorbate as a cofactor.

The catalysed reaction is a (2S)-flavan-4-one + 2-oxoglutarate + O2 = a (2R,3R)-dihydroflavonol + succinate + CO2. Its pathway is secondary metabolite biosynthesis; flavonoid biosynthesis. Catalyzes the 3-beta-hydroxylation of 2S-flavanones to 2R,3R-dihydroflavonols which are intermediates in the biosynthesis of flavonols, anthocyanidins, catechins and proanthocyanidins in plants. The sequence is that of Naringenin,2-oxoglutarate 3-dioxygenase (AN3) from Petunia hybrida (Petunia).